The primary structure comprises 331 residues: tRNA N6-adenosine threonylcarbamoyltransferase (331 aa).

Fe cation contacts are provided by histidine 109, histidine 113, and tyrosine 130. Residues 130–134 (YLSGG), aspartate 162, aspartate 183, and serine 262 contribute to the substrate site. Fe cation is bound at residue aspartate 290.

It belongs to the KAE1 / TsaD family. The cofactor is Fe(2+).

The protein localises to the cytoplasm. The enzyme catalyses L-threonylcarbamoyladenylate + adenosine(37) in tRNA = N(6)-L-threonylcarbamoyladenosine(37) in tRNA + AMP + H(+). In terms of biological role, required for the formation of a threonylcarbamoyl group on adenosine at position 37 (t(6)A37) in tRNAs that read codons beginning with adenine. Is probably involved in the transfer of the threonylcarbamoyl moiety of threonylcarbamoyl-AMP (TC-AMP) to the N6 group of A37. In Metallosphaera sedula (strain ATCC 51363 / DSM 5348 / JCM 9185 / NBRC 15509 / TH2), this protein is tRNA N6-adenosine threonylcarbamoyltransferase.